The chain runs to 311 residues: Methionyl-tRNA formyltransferase (311 aa).

112–115 (SLLP) contacts (6S)-5,6,7,8-tetrahydrofolate.

The protein belongs to the Fmt family.

The enzyme catalyses L-methionyl-tRNA(fMet) + (6R)-10-formyltetrahydrofolate = N-formyl-L-methionyl-tRNA(fMet) + (6S)-5,6,7,8-tetrahydrofolate + H(+). In terms of biological role, attaches a formyl group to the free amino group of methionyl-tRNA(fMet). The formyl group appears to play a dual role in the initiator identity of N-formylmethionyl-tRNA by promoting its recognition by IF2 and preventing the misappropriation of this tRNA by the elongation apparatus. This Chelativorans sp. (strain BNC1) protein is Methionyl-tRNA formyltransferase.